The sequence spans 425 residues: Transmembrane protein 184A (425 aa).

7 helical membrane passes run 51 to 71, 96 to 116, 133 to 153, 189 to 209, 226 to 246, 261 to 281, and 303 to 323; these read LFLT…TALL, LLFI…LLGG, FVIY…SAIM, TLQF…LQAF, VTLV…LFYF, FLTI…LAIL, and LAAG…SLAL. Residues 375–425 are disordered; it reads QYTQQSTHEAPGPGQGGHPAPSTHPGPASGSGGGKKSRNIEKRMLIPSEDL. The span at 392-402 shows a compositional bias: low complexity; the sequence is HPAPSTHPGPA.

Belongs to the TMEM184 family. As to expression, expressed in testis, pancreas, parotid salivary gland and mammary gland (at protein level).

The protein localises to the cell membrane. Its subcellular location is the cytoplasm. The protein resides in the perinuclear region. It is found in the cytoplasmic vesicle membrane. It localises to the early endosome membrane. The protein localises to the endosome. Its subcellular location is the cytoplasmic vesicle. The protein resides in the secretory vesicle membrane. Acts as a heparin receptor in vascular cells. May be involved in vesicle transport in exocrine cells and Sertoli cells. In Mus musculus (Mouse), this protein is Transmembrane protein 184A (Tmem184a).